The primary structure comprises 216 residues: Small ribosomal subunit protein uS5 (216 aa).

Residues 51-114 (LEEEVIDVNL…DDAKFNIIKV (64 aa)) enclose the S5 DRBM domain.

This sequence belongs to the universal ribosomal protein uS5 family. As to quaternary structure, part of the 30S ribosomal subunit. Contacts protein S4.

With S4 and S12 plays an important role in translational accuracy. This Methanothermobacter thermautotrophicus (strain ATCC 29096 / DSM 1053 / JCM 10044 / NBRC 100330 / Delta H) (Methanobacterium thermoautotrophicum) protein is Small ribosomal subunit protein uS5.